The sequence spans 468 residues: Tapasin-related protein (468 aa).

Residues 1–18 form the signal peptide; it reads MGTQEGWCLLLCLALSGA. Residues 19 to 405 are Lumenal-facing; it reads AETKPHPAEG…STQVVPPERR (387 aa). The region spanning 181–297 is the Ig-like V-type domain; it reads PQGTVRTAVE…SLYRAQQIIQ (117 aa). Cystine bridges form between Cys-212-Cys-283 and Cys-321-Cys-382. The Ig-like C1-type domain maps to 304-394; that stretch reads PKVRLSLANE…THISLEEPLG (91 aa). The helical transmembrane segment at 406–426 threads the bilayer; that stretch reads TALGVIFASSLFLLALMFLGL. The Cytoplasmic portion of the chain corresponds to 427 to 468; sequence QRRQAPTGLGLLQAERWETTSCADTQSSHLHEDRTARVSQPS. The interval 449–468 is disordered; that stretch reads ADTQSSHLHEDRTARVSQPS.

As to quaternary structure, interacts with peptide-free HLA-A*02-B2M complexes or those loaded with low affinity peptides, likely facilitating peptide exchange onto higher affinity peptides. Interacts with MR1 in a ligand-independent way; this interaction may stabilize MR1 pool and facilitate ligand loading and dissociation.

It is found in the cell membrane. It localises to the endoplasmic reticulum membrane. The protein localises to the microsome membrane. Its subcellular location is the golgi apparatus membrane. Component of the antigen processing and presentation pathway, which binds to MHC class I coupled with beta2-microglobulin/B2M. Association between TAPBPR and MHC class I occurs in the absence of a functional peptide-loading complex (PLC). This is Tapasin-related protein (TAPBPL) from Homo sapiens (Human).